The following is a 381-amino-acid chain: Queuine tRNA-ribosyltransferase (381 aa).

The active-site Proton acceptor is Asp96. Substrate is bound by residues 96–100, Asp150, Gln193, and Gly220; that span reads DSGGF. The RNA binding stretch occupies residues 251 to 257; sequence GVGSPDS. The active-site Nucleophile is Asp270. The RNA binding; important for wobble base 34 recognition stretch occupies residues 275-279; that stretch reads TRIAR. The Zn(2+) site is built by Cys308, Cys310, Cys313, and His339.

This sequence belongs to the queuine tRNA-ribosyltransferase family. Homodimer. Within each dimer, one monomer is responsible for RNA recognition and catalysis, while the other monomer binds to the replacement base PreQ1. Zn(2+) serves as cofactor.

The catalysed reaction is 7-aminomethyl-7-carbaguanine + guanosine(34) in tRNA = 7-aminomethyl-7-carbaguanosine(34) in tRNA + guanine. It functions in the pathway tRNA modification; tRNA-queuosine biosynthesis. Its function is as follows. Catalyzes the base-exchange of a guanine (G) residue with the queuine precursor 7-aminomethyl-7-deazaguanine (PreQ1) at position 34 (anticodon wobble position) in tRNAs with GU(N) anticodons (tRNA-Asp, -Asn, -His and -Tyr). Catalysis occurs through a double-displacement mechanism. The nucleophile active site attacks the C1' of nucleotide 34 to detach the guanine base from the RNA, forming a covalent enzyme-RNA intermediate. The proton acceptor active site deprotonates the incoming PreQ1, allowing a nucleophilic attack on the C1' of the ribose to form the product. After dissociation, two additional enzymatic reactions on the tRNA convert PreQ1 to queuine (Q), resulting in the hypermodified nucleoside queuosine (7-(((4,5-cis-dihydroxy-2-cyclopenten-1-yl)amino)methyl)-7-deazaguanosine). This Bacillus licheniformis (strain ATCC 14580 / DSM 13 / JCM 2505 / CCUG 7422 / NBRC 12200 / NCIMB 9375 / NCTC 10341 / NRRL NRS-1264 / Gibson 46) protein is Queuine tRNA-ribosyltransferase.